We begin with the raw amino-acid sequence, 332 residues long: Glycerol-3-phosphate dehydrogenase [NAD(P)+] (332 aa).

Residues Trp-11, Arg-30, and Lys-108 each contribute to the NADPH site. Sn-glycerol 3-phosphate is bound by residues Lys-108, Gly-137, and Ser-139. Ala-141 lines the NADPH pocket. The sn-glycerol 3-phosphate site is built by Lys-192, Asp-245, Ser-255, Arg-256, and Asn-257. Lys-192 functions as the Proton acceptor in the catalytic mechanism. Arg-256 lines the NADPH pocket. The NADPH site is built by Val-280 and Glu-282.

This sequence belongs to the NAD-dependent glycerol-3-phosphate dehydrogenase family.

The protein localises to the cytoplasm. The catalysed reaction is sn-glycerol 3-phosphate + NAD(+) = dihydroxyacetone phosphate + NADH + H(+). The enzyme catalyses sn-glycerol 3-phosphate + NADP(+) = dihydroxyacetone phosphate + NADPH + H(+). It functions in the pathway membrane lipid metabolism; glycerophospholipid metabolism. Its function is as follows. Catalyzes the reduction of the glycolytic intermediate dihydroxyacetone phosphate (DHAP) to sn-glycerol 3-phosphate (G3P), the key precursor for phospholipid synthesis. The protein is Glycerol-3-phosphate dehydrogenase [NAD(P)+] of Burkholderia multivorans (strain ATCC 17616 / 249).